A 404-amino-acid chain; its full sequence is Phosphoribulokinase, chloroplastic (404 aa).

A chloroplast-targeting transit peptide spans 1 to 53 (MAFCSPHTTTSLRSPCTTIPNSGFRQNQVIFFTTRSSRRSNTRHGARTFQVSC). An intrachain disulfide couples Cys-69 to Cys-108.

This sequence belongs to the phosphoribulokinase family.

It is found in the plastid. It localises to the chloroplast. It catalyses the reaction D-ribulose 5-phosphate + ATP = D-ribulose 1,5-bisphosphate + ADP + H(+). It participates in carbohydrate biosynthesis; Calvin cycle. With respect to regulation, light regulated via thioredoxin by reversible oxidation/reduction of sulfhydryl/disulfide groups. The protein is Phosphoribulokinase, chloroplastic of Triticum aestivum (Wheat).